Here is a 618-residue protein sequence, read N- to C-terminus: uncharacterized protein (618 aa).

A disordered region spans residues 1-45; sequence MSSKSASKLKREAKKAERLAAKGESVKPSKKNGTKNGKDKEVDGV. Basic and acidic residues-rich tracts occupy residues 14–27 and 36–45; these read KKAE…ESVK and NGKDKEVDGV. 2 positions are modified to phosphoserine: S50 and S53. T54 carries the phosphothreonine modification. Residues S55 and S64 each carry the phosphoserine modification. ABC transporter domains lie at 76 to 325 and 388 to 609; these read IKID…LKQQ and IAFN…QSRD. Residues 108-115 and 423-430 each bind ATP; these read GDNGSGKS and GKNGTGKS.

The protein belongs to the ABC transporter superfamily.

The protein localises to the cytoplasm. This is an uncharacterized protein from Schizosaccharomyces pombe (strain 972 / ATCC 24843) (Fission yeast).